An 862-amino-acid polypeptide reads, in one-letter code: Valine--tRNA ligase (862 aa).

Positions 47–57 match the 'HIGH' region motif; it reads PTASGSLHIGH. Residues 110–130 form a disordered region; the sequence is EPGLTPPFEGGDNKSSKAADQ. Residues 120–129 are compositionally biased toward basic and acidic residues; the sequence is GDNKSSKAAD. The 'KMSKS' region motif lies at 584–588; that stretch reads KMSKS. Lysine 587 contacts ATP.

This sequence belongs to the class-I aminoacyl-tRNA synthetase family. ValS type 2 subfamily. As to quaternary structure, monomer.

It localises to the cytoplasm. It catalyses the reaction tRNA(Val) + L-valine + ATP = L-valyl-tRNA(Val) + AMP + diphosphate. Its function is as follows. Catalyzes the attachment of valine to tRNA(Val). As ValRS can inadvertently accommodate and process structurally similar amino acids such as threonine, to avoid such errors, it has a 'posttransfer' editing activity that hydrolyzes mischarged Thr-tRNA(Val) in a tRNA-dependent manner. This is Valine--tRNA ligase from Leifsonia xyli subsp. xyli (strain CTCB07).